Reading from the N-terminus, the 475-residue chain is Ribulose bisphosphate carboxylase large chain (475 aa).

Positions 1–2 (MS) are excised as a propeptide. N-acetylproline is present on Pro-3. Lys-14 carries the post-translational modification N6,N6,N6-trimethyllysine. Substrate-binding residues include Asn-123 and Thr-173. Lys-175 serves as the catalytic Proton acceptor. A substrate-binding site is contributed by Lys-177. The Mg(2+) site is built by Lys-201, Asp-203, and Glu-204. N6-carboxylysine is present on Lys-201. His-294 (proton acceptor) is an active-site residue. 3 residues coordinate substrate: Arg-295, His-327, and Ser-379.

The protein belongs to the RuBisCO large chain family. Type I subfamily. In terms of assembly, heterohexadecamer of 8 large chains and 8 small chains; disulfide-linked. The disulfide link is formed within the large subunit homodimers. Mg(2+) is required as a cofactor. In terms of processing, the disulfide bond which can form in the large chain dimeric partners within the hexadecamer appears to be associated with oxidative stress and protein turnover.

It is found in the plastid. The protein localises to the chloroplast. The catalysed reaction is 2 (2R)-3-phosphoglycerate + 2 H(+) = D-ribulose 1,5-bisphosphate + CO2 + H2O. It catalyses the reaction D-ribulose 1,5-bisphosphate + O2 = 2-phosphoglycolate + (2R)-3-phosphoglycerate + 2 H(+). Functionally, ruBisCO catalyzes two reactions: the carboxylation of D-ribulose 1,5-bisphosphate, the primary event in carbon dioxide fixation, as well as the oxidative fragmentation of the pentose substrate in the photorespiration process. Both reactions occur simultaneously and in competition at the same active site. The sequence is that of Ribulose bisphosphate carboxylase large chain from Amborella trichopoda.